Here is a 477-residue protein sequence, read N- to C-terminus: Glutamate--tRNA ligase (477 aa).

Residues 8 to 18 (PSPTGTLHIGT) carry the 'HIGH' region motif. Residues 247-251 (KLSKR) carry the 'KMSKS' region motif. Lys250 is an ATP binding site.

The protein belongs to the class-I aminoacyl-tRNA synthetase family. Glutamate--tRNA ligase type 1 subfamily. In terms of assembly, monomer.

The protein resides in the cytoplasm. The enzyme catalyses tRNA(Glu) + L-glutamate + ATP = L-glutamyl-tRNA(Glu) + AMP + diphosphate. Functionally, catalyzes the attachment of glutamate to tRNA(Glu) in a two-step reaction: glutamate is first activated by ATP to form Glu-AMP and then transferred to the acceptor end of tRNA(Glu). The chain is Glutamate--tRNA ligase from Synechococcus sp. (strain CC9902).